Reading from the N-terminus, the 346-residue chain is 2,5-dichlorohydroquinone reductive dechlorinase (346 aa).

Residues 43-154 enclose the GST N-terminal domain; sequence PRFELFHFVF…YLCDALSGGT (112 aa). Positions 189–335 constitute a GST C-terminal domain; sequence DRRPESMQAV…AIIQWPGHPP (147 aa).

The protein belongs to the GST superfamily.

It catalyses the reaction 2,5-dichlorohydroquinone + 2 glutathione = chlorohydroquinone + glutathione disulfide + chloride + H(+). The enzyme catalyses chlorohydroquinone + 2 glutathione = hydroquinone + glutathione disulfide + chloride + H(+). Its pathway is xenobiotic degradation; gamma-hexachlorocyclohexane degradation. Functionally, catalyzes the degradation of 2,5-dichlorohydroquinone (2,5-DCHQ) into hydroquinone (HQ) via chlorohydroquinone (CHQ). Is involved in the degradation pathway that allows S.japonicum UT26 to grow on gamma-hexachlorocyclohexane (gamma-HCH or lindane) as the sole source of carbon and energy. However, the conversion of CHQ to HQ by LinD seems not to be essential for this degradation pathway, because the conversion rate of CHQ to HQ is much lower than that of 2,5-DCHQ to CHQ. CHQ is more efficiently degraded by LinE in strain UT26. The sequence is that of 2,5-dichlorohydroquinone reductive dechlorinase from Sphingobium indicum (strain DSM 16413 / CCM 7287 / MTCC 6362 / UT26 / NBRC 101211 / UT26S) (Sphingobium japonicum).